The primary structure comprises 807 residues: Hyaluronate lyase (807 aa).

An N-terminal signal peptide occupies residues M1–A40. Active-site residues include N241, H297, and Y306.

This sequence belongs to the polysaccharide lyase 8 family.

Its subcellular location is the secreted. It carries out the reaction [hyaluronan](n) = n 3-(4-deoxy-beta-D-gluc-4-enuronosyl)-N-acetyl-D-glucosamine + H2O. The polypeptide is Hyaluronate lyase (Staphylococcus aureus (strain NCTC 8325 / PS 47)).